The sequence spans 222 residues: Glutathione S-transferase alpha-2 (222 aa).

A GST N-terminal domain is found at 3-83; that stretch reads GKPVLHYFNA…YIATKYDLYG (81 aa). Lys-4 is subject to N6-succinyllysine. Glutathione contacts are provided by residues Tyr-9, Lys-45, 54–55, and 67–68; these read QV and QT. The GST C-terminal domain maps to 85–208; sequence DMKERALIDM…QPGSQRKPAM (124 aa).

Belongs to the GST superfamily. Alpha family. As to quaternary structure, homodimer or heterodimer of GSTA1 and GSTA2.

It localises to the cytoplasm. It catalyses the reaction RX + glutathione = an S-substituted glutathione + a halide anion + H(+). In terms of biological role, catalyzes the conjugation of glutathione to a large variety of electrophilic compounds. The polypeptide is Glutathione S-transferase alpha-2 (Gsta2) (Rattus norvegicus (Rat)).